Reading from the N-terminus, the 137-residue chain is Large ribosomal subunit protein uL16c (137 aa).

It belongs to the universal ribosomal protein uL16 family. As to quaternary structure, part of the 50S ribosomal subunit.

The protein localises to the plastid. The protein is Large ribosomal subunit protein uL16c of Cuscuta exaltata (Tall dodder).